The primary structure comprises 1353 residues: Ankyrin repeat domain-containing protein 36B (1353 aa).

ANK repeat units lie at residues 19-48 (YHLK…DANK), 52-81 (KERT…ELNL), 85-114 (EDRT…DPNI), 118-147 (FGRT…NIEE), 151-180 (NEYQ…NVNA), and 184-213 (LGRS…DVFS). Disordered stretches follow at residues 249–307 (PINS…KDSV) and 349–607 (MGGG…KATS). Polar residues predominate over residues 250–259 (INSNPVSPQK). Basic and acidic residues-rich tracts occupy residues 260–272 (QRAE…DKDS) and 295–306 (PAEKATSDEKDS). Composition is skewed to polar residues over residues 355 to 367 (GTVS…ASKT) and 389 to 400 (GTVSSQKQQALK). Composition is skewed to basic and acidic residues over residues 436–455 (TSDE…DGEI) and 471–491 (SVKE…EKSR). The span at 579-600 (VSNIPTEIKDGQQSGTVSSQKQ) shows a compositional bias: polar residues. Coiled coils occupy residues 731 to 762 (AEQD…QIHS), 821 to 908 (IKLK…YRIE), 937 to 1055 (SETD…DHDQ), and 1119 to 1344 (VFEH…LQHS).

It belongs to the ANKRD36 family.

This Homo sapiens (Human) protein is Ankyrin repeat domain-containing protein 36B (ANKRD36B).